A 1482-amino-acid chain; its full sequence is Calcium-dependent protein kinase 6 (1482 aa).

Disordered regions lie at residues 250-320 (TNNY…IRPN) and 739-760 (SENF…DDSN). The segment covering 254-264 (AHDNNQDSNSY) has biased composition (polar residues). The segment covering 277-301 (EEDNDTGDTYADNEEDEDNRDDNDD) has biased composition (acidic residues). A compositionally biased stretch (polar residues) spans 302–318 (YSQYNQCEVESDTNQIR). Residues 739 to 748 (SENFSNNFND) show a composition bias toward low complexity. Positions 749–760 (NKQKSLKNDDSN) are enriched in basic and acidic residues. 2 EF-hand domains span residues 931–966 (IFER…LCYN) and 972–1007 (VDKK…LLKQ). Positions 985, 987, 989, 991, and 996 each coordinate Ca(2+). Residues 1043-1295 (LSFKKILGCG…AAVLLHHPWF (253 aa)) enclose the Protein kinase domain. ATP contacts are provided by residues 1049-1057 (LGCGAFGEV) and Lys1072. The Proton acceptor role is filled by Asp1162. EF-hand domains lie at 1338–1373 (NHVK…AGVK), 1376–1406 (DINR…RWKN), 1407–1442 (IDST…NGVN), and 1468–1482 (KISF…LSTF). The Ca(2+) site is built by Asp1351, Asn1353, Asn1355, Ser1357, and Glu1362. Ca(2+) is bound by residues Asp1420, Asp1422, Asp1424, Tyr1426, and Asp1431.

Belongs to the protein kinase superfamily. Ser/Thr protein kinase family. CDPK subfamily. The cofactor is Mg(2+).

The catalysed reaction is L-seryl-[protein] + ATP = O-phospho-L-seryl-[protein] + ADP + H(+). It catalyses the reaction L-threonyl-[protein] + ATP = O-phospho-L-threonyl-[protein] + ADP + H(+). With respect to regulation, activated by calcium. Its function is as follows. Calcium-dependent protein kinase which acts as a sensor and effector of intracellular Ca(2+) levels. In sporozoites, probably involved in the secretion of the cysteine protease that cleaves circumsporozoite protein CSP, thereby exposing CSP TSR domain, which binds with high affinity to highly sulfated heparan sulfate proteoglycans (HSPGs), resulting in productive invasion of the host hepatocytes. The sequence is that of Calcium-dependent protein kinase 6 from Plasmodium berghei (strain Anka).